Reading from the N-terminus, the 86-residue chain is Small ribosomal subunit protein bS18 (86 aa).

The protein belongs to the bacterial ribosomal protein bS18 family. In terms of assembly, part of the 30S ribosomal subunit. Forms a tight heterodimer with protein bS6.

Functionally, binds as a heterodimer with protein bS6 to the central domain of the 16S rRNA, where it helps stabilize the platform of the 30S subunit. The sequence is that of Small ribosomal subunit protein bS18 from Campylobacter jejuni subsp. jejuni serotype O:6 (strain 81116 / NCTC 11828).